A 435-amino-acid polypeptide reads, in one-letter code: Envelope glycoprotein M (435 aa).

The Intravirion portion of the chain corresponds to 1–36 (MGTQKKGPRSEKVSPYDTTTPEVEALDHQMDTLNWR). The chain crosses the membrane as a helical span at residues 37–57 (IWIIQVMMFTLGAVMLLATLI). The Virion surface portion of the chain corresponds to 58 to 111 (AASSEYTGIPCFYAAVVDYELFNATLDGGVWSGNRGGYSAPVLFLEPHSVVAFT). Residues 112 to 132 (YYTALTAMAMAVYTLITAAII) traverse the membrane as a helical segment. Over 133–155 (HRETKNQRVRQSSGVAWLVVDPT) the chain is Intravirion. The helical transmembrane segment at 156 to 176 (TLFWGLLSLWLLNAVVLLLAY) threads the bilayer. The Virion surface portion of the chain corresponds to 177-178 (KQ). The helical transmembrane segment at 179–199 (IGVAATLYLGHFATSVIFTTY) threads the bilayer. Topologically, residues 200 to 233 (FCGRGKLDETNIKAVANLRQQSVFLYRLAGPTRA) are intravirion. Residues 234-254 (VFVNLMAALMAICILFVSLML) form a helical membrane-spanning segment. At 255 to 265 (ELVVANHLHTG) the chain is on the virion surface side. The chain crosses the membrane as a helical span at residues 266-288 (LWSSVSVAMSTFSTLSVVYLIVS). At 289-294 (ELILAH) the chain is on the intravirion side. A helical transmembrane segment spans residues 295-317 (YIHVLIGPSLGTLVACATLGTAA). Topologically, residues 318–334 (HSYMDRLYDPISVQSPR) are virion surface. Residues 335 to 355 (LIPTTRGTLACLAVFSVVMLL) form a helical membrane-spanning segment. The Intravirion portion of the chain corresponds to 356-435 (LRLMRAYVYH…LYERSNSGWE (80 aa)).

This sequence belongs to the herpesviridae glycoprotein M family. Interacts (via N-terminus) with gN (via N-terminus). The gM-gN heterodimer forms the gCII complex.

It is found in the virion membrane. The protein resides in the host Golgi apparatus. It localises to the host trans-Golgi network. The protein localises to the host endosome membrane. Its subcellular location is the host nucleus inner membrane. Functionally, envelope glycoprotein important for virion assembly and egress. Plays a role in the correct incorporation of gH-gL into virion membrane. Directs the glycoprotein N (gN) to the host trans-Golgi network. The sequence is that of Envelope glycoprotein M from Homo sapiens (Human).